The primary structure comprises 151 residues: MVAIRVIRDAGADTQVPLPSYETTGAAGADIRANLPDRGSLTLAPGGRALIPTGLRVEIPAGYEIQIRPRSGLALKHGITLPNTPGTIDSDYRGPLGVILLNAGAEPFEVVHGERIAQLVVAPVVQARFELTEALGETERGAGGFGSTGRG.

Substrate is bound by residues 70–72 (RSG), Asn83, and 87–89 (TID).

The protein belongs to the dUTPase family. Mg(2+) serves as cofactor.

The enzyme catalyses dUTP + H2O = dUMP + diphosphate + H(+). The protein operates within pyrimidine metabolism; dUMP biosynthesis; dUMP from dCTP (dUTP route): step 2/2. This enzyme is involved in nucleotide metabolism: it produces dUMP, the immediate precursor of thymidine nucleotides and it decreases the intracellular concentration of dUTP so that uracil cannot be incorporated into DNA. The polypeptide is Deoxyuridine 5'-triphosphate nucleotidohydrolase (Ruegeria pomeroyi (strain ATCC 700808 / DSM 15171 / DSS-3) (Silicibacter pomeroyi)).